A 119-amino-acid chain; its full sequence is Fluoride-specific ion channel FluC (119 aa).

3 helical membrane passes run 37 to 54, 61 to 83, and 93 to 112; these read LFANWTGALLIGIFAETV, LLLITGFLGSLTTLSGFSLETVT, and ALSNIFLHTAGSLLLTWLGL. The Na(+) site is built by G69 and T72.

Belongs to the fluoride channel Fluc/FEX (TC 1.A.43) family.

Its subcellular location is the cell inner membrane. The catalysed reaction is fluoride(in) = fluoride(out). Na(+) is not transported, but it plays an essential structural role and its presence is essential for fluoride channel function. Fluoride-specific ion channel. Important for reducing fluoride concentration in the cell, thus reducing its toxicity. The chain is Fluoride-specific ion channel FluC from Neisseria meningitidis serogroup C (strain 053442).